A 384-amino-acid chain; its full sequence is Urotensin-2 receptor (384 aa).

At 1–54 (MALSPEPSSRFLVPATMGSAMPELPGAPNASLNSSLASPTEPNSLEDLVATGTI) the chain is on the extracellular side. Residues N29 and N33 are each glycosylated (N-linked (GlcNAc...) asparagine). A helical transmembrane segment spans residues 55–77 (GVVLSAMGVVGMAGNVYTLTVMC). The Cytoplasmic segment spans residues 78-87 (RFLHTSASMY). Residues 88-113 (VYVINLALADLLYLLSIPFIVATYVT) form a helical membrane-spanning segment. Over 114-124 (KRWHFGDVGCR) the chain is Extracellular. A disulfide bridge links C123 with C199. Residues 125–146 (VLFSLDFLTMHASIFTLTLMSR) form a helical membrane-spanning segment. Topologically, residues 147–167 (ERYAAVVRPLDTVQRSKGYRK) are cytoplasmic. A helical membrane pass occupies residues 168–186 (VLALGTWLLALLLALPMML). The Extracellular portion of the chain corresponds to 187–209 (AIRLVRRGHKSLCLPAWGQRTHR). The chain crosses the membrane as a helical span at residues 210 to 232 (AYLTLLFGTSIVGPGVVIGLLYV). The Cytoplasmic portion of the chain corresponds to 233–259 (RLARAYWLSQRSSFTQTRRLPNPRVLY). The chain crosses the membrane as a helical span at residues 260-285 (LILGIVLLFWACFLPFWLWQLLAQYR). The Extracellular portion of the chain corresponds to 286–299 (GAPPLAPRSARIVN). Residues 300-320 (YLTTCLTYGNSCVNPFLYTLL) form a helical membrane-spanning segment. The Cytoplasmic segment spans residues 321-384 (TKNYRDYRQR…SQAVPGSLCV (64 aa)).

Belongs to the G-protein coupled receptor 1 family. As to expression, expressed in neural tissue, including sensory epithelia.

It is found in the cell membrane. Functionally, high affinity receptor for urotensin-2 and urotensin-2B. The activity of this receptor is mediated by a G-protein that activate a phosphatidylinositol-calcium second messenger system. The polypeptide is Urotensin-2 receptor (UTS2R) (Bos taurus (Bovine)).